Consider the following 267-residue polypeptide: 5'-nucleotidase SurE (267 aa).

Residues Asp-9, Asp-10, Ser-40, and Asn-97 each coordinate a divalent metal cation.

Belongs to the SurE nucleotidase family. The cofactor is a divalent metal cation.

It localises to the cytoplasm. The catalysed reaction is a ribonucleoside 5'-phosphate + H2O = a ribonucleoside + phosphate. Its function is as follows. Nucleotidase that shows phosphatase activity on nucleoside 5'-monophosphates. The sequence is that of 5'-nucleotidase SurE from Helicobacter pylori (strain G27).